The chain runs to 545 residues: Sphingomyelin phosphodiesterase 5 (545 aa).

A mitochondrion-targeting transit peptide spans 1-35 (MSLRESPFPNGFLEGLHAVGWGLIFPCFWFLDRLI). At 36-64 (AVCISTTLERMWRLEQECYLHPLKVVFGS) the chain is on the mitochondrial matrix side. The helical; Signal-anchor for type II membrane protein transmembrane segment at 65–85 (ILFFILFVISTPFALLGFILW) threads the bilayer. Topologically, residues 86–545 (APLQAIRRPF…LSVSLDSEQN (460 aa)) are mitochondrial intermembrane. Glu-258 contributes to the Mg(2+) binding site. His-529 (proton acceptor) is an active-site residue.

The protein belongs to the neutral sphingomyelinase family. Mg(2+) serves as cofactor. Requires Mn(2+) as cofactor.

It localises to the mitochondrion inner membrane. It is found in the endoplasmic reticulum membrane. It catalyses the reaction a sphingomyelin + H2O = phosphocholine + an N-acylsphing-4-enine + H(+). The enzyme catalyses N-(hexadecanoyl)-sphing-4-enine-1-phosphocholine + H2O = N-hexadecanoylsphing-4-enine + phosphocholine + H(+). It participates in lipid metabolism; sphingolipid metabolism. Activated by the phospholipids cardiolipin, phosphatidylserine, and phosphatidylethanolamine. Strongest activation with cardiolipin. In terms of biological role, catalyzes the hydrolysis of membrane sphingomyelin to form phosphorylcholine and ceramide. The sequence is that of Sphingomyelin phosphodiesterase 5 from Danio rerio (Zebrafish).